The primary structure comprises 906 residues: NACHT, LRR and PYD domains-containing protein 1b allele 4 (906 aa).

Residues 1–22 (MEESPPKQKSNTKVAQHEGQQD) form a disordered region. Residues 126 to 435 (QLVIIEGAAG…EFFAAISCIL (310 aa)) form the NACHT domain. 132–139 (GAAGIGKS) contributes to the ATP binding site. 2 LRR repeats span residues 627–647 (NLEG…QSLC) and 684–704 (SLTE…RMLC). The FIIND (incomplete) domain maps to 789-906 (FWGPTGPVAT…FQEHGSRNAR (118 aa)).

It belongs to the NLRP family. As to expression, expressed in macrophages.

It localises to the cytoplasm. The protein resides in the cytosol. In terms of biological role, probable inactive allele of Nlrp1b, which lacks a CARD domain, suggesting that it is not able to form an inflammasome. Contrary to Nlrp1b allele 1, allele 4 is not activated by B.anthracis lethal toxin and no other activation signal is reported. This Mus musculus (Mouse) protein is NACHT, LRR and PYD domains-containing protein 1b allele 4.